Here is a 131-residue protein sequence, read N- to C-terminus: Small ribosomal subunit protein eS24 (131 aa).

M1 is subject to N-acetylmethionine. T9 is modified (phosphothreonine). K37 is covalently cross-linked (Glycyl lysine isopeptide (Lys-Gly) (interchain with G-Cter in SUMO2)). Residues 90-100 (RLARHGLYEKK) are compositionally biased toward basic and acidic residues. Residues 90 to 131 (RLARHGLYEKKKTSRKQRKERKNRMKKVRGTAKANVGAGKKK) are disordered. Residues 101-119 (KTSRKQRKERKNRMKKVRG) show a composition bias toward basic residues.

It belongs to the eukaryotic ribosomal protein eS24 family. As to quaternary structure, component of the small ribosomal subunit. Part of the small subunit (SSU) processome, composed of more than 70 proteins and the RNA chaperone small nucleolar RNA (snoRNA) U3.

Its subcellular location is the cytoplasm. The protein localises to the nucleus. It localises to the nucleolus. Functionally, component of the small ribosomal subunit. The ribosome is a large ribonucleoprotein complex responsible for the synthesis of proteins in the cell. Required for processing of pre-rRNA and maturation of 40S ribosomal subunits. Part of the small subunit (SSU) processome, first precursor of the small eukaryotic ribosomal subunit. During the assembly of the SSU processome in the nucleolus, many ribosome biogenesis factors, an RNA chaperone and ribosomal proteins associate with the nascent pre-rRNA and work in concert to generate RNA folding, modifications, rearrangements and cleavage as well as targeted degradation of pre-ribosomal RNA by the RNA exosome. This chain is Small ribosomal subunit protein eS24 (RPS24), found in Pongo abelii (Sumatran orangutan).